Consider the following 268-residue polypeptide: uncharacterized protein (268 aa).

This is an uncharacterized protein from Schizosaccharomyces pombe (strain 972 / ATCC 24843) (Fission yeast).